A 251-amino-acid polypeptide reads, in one-letter code: Probable metal-binding protein YrpE (251 aa).

Residues 1–30 (MNILFSKRLGILTIGSLLVLAGCQTSGSSA) form the signal peptide. The segment covering 25–41 (TSGSSAGESNQTTSSSA) has biased composition (polar residues). A disordered region spans residues 25–72 (TSGSSAGESNQTTSSSAVEEDSSKTQEQTSDSHTHEHSHDHSHAHDEE). The span at 54–72 (SDSHTHEHSHDHSHAHDEE) shows a compositional bias: basic and acidic residues. Positions 203, 212, 214, 247, and 251 each coordinate Zn(2+).

It belongs to the calycin superfamily. ZinT family.

This chain is Probable metal-binding protein YrpE (yrpE), found in Bacillus subtilis (strain 168).